The chain runs to 215 residues: Cytochrome b6 (215 aa).

Residues 32–52 traverse the membrane as a helical segment; the sequence is IFYCLGGITLTCFLVQVATGF. Residue cysteine 35 participates in heme c binding. The heme b site is built by histidine 86 and histidine 100. 3 helical membrane-spanning segments follow: residues 90-110, 116-136, and 186-206; these read ASMM…TGGF, LTWV…VTGY, and LHTF…FLMI. 2 residues coordinate heme b: histidine 187 and histidine 202.

Belongs to the cytochrome b family. PetB subfamily. In terms of assembly, the 4 large subunits of the cytochrome b6-f complex are cytochrome b6, subunit IV (17 kDa polypeptide, PetD), cytochrome f and the Rieske protein, while the 4 small subunits are PetG, PetL, PetM and PetN. The complex functions as a dimer. Heme b serves as cofactor. The cofactor is heme c.

It is found in the plastid. The protein localises to the chloroplast thylakoid membrane. Component of the cytochrome b6-f complex, which mediates electron transfer between photosystem II (PSII) and photosystem I (PSI), cyclic electron flow around PSI, and state transitions. The sequence is that of Cytochrome b6 from Oenothera elata subsp. hookeri (Hooker's evening primrose).